A 299-amino-acid chain; its full sequence is Non-structural protein V (299 aa).

The disordered stretch occupies residues 41-99; that stretch reads DNPGQERATCREEKAGSSGLSKPCLSAIGSTEGGAPRIRGQGPGESDDDAETLGIPPRN. The tract at residues 110-120 is interaction with host STAT1; the sequence is YYVYDHSGEAV. Over residues 134 to 145 the composition is skewed to low complexity; it reads GLDGDSTLSGGD. A disordered region spans residues 134–168; it reads GLDGDSTLSGGDNESENSDVDIGEPDTEGYAITDR. Residues 146–160 show a composition bias toward acidic residues; that stretch reads NESENSDVDIGEPDT. Zn(2+) contacts are provided by H232, C251, C255, C267, C269, C272, C276, and C279.

Belongs to the paramyxoviruses V protein family. Interacts with host IFIH1/MDA5 and DHX58/LGP2; these interactions are involved in the inhibition of the host type I interferon signaling pathway. Interacts with host TYK2; this interaction inhibits the type I interferon signaling pathway without affecting the type II pathway. Interacts with host IRF7; this interaction inhibits IRF7 translocation to the nucleus. Interacts with host CHUK. Interacts with host RELA/p65; this interaction inhibits the nuclear translocation of NF-KappaB. Interacts (via N-terminus) with host STAT1 and JAK1; these interactions inhibit STAT1 phosphorylation by Jak1 and thereby the type I interferon signaling pathway. Interacts (via C-terminus) with host STAT2; this interaction is involved in the inhibition of the host type I interferon signaling pathway. Forms a complex with host PPP1CA and PPP1CC; this interaction prevents dephosphorylation of host IFIH1/MDA5 and leads to the inhibition of the host type I interferon signaling pathway. Interacts with host IRF9; this interaction prevents the binding of IRF9 to STAT2 and thereby the type I interferon signaling pathway. Interacts with host RIGI regulatory protein (via CARDs domain) and host TRIM25 (via SPRY domain); these interactions prevent TRIM25-mediated ubiquitination of RIG-I and disrupts downstream RIG-I signaling.

The protein localises to the host cytoplasm. Functionally, plays an essential role in the inhibition of host immune response. Prevents the establishment of cellular antiviral state by blocking interferon-alpha/beta (IFN-alpha/beta) production and signaling pathway. Interacts with host IFIH1/MDA5 and DHX58/LGP2 to inhibit the transduction pathway involved in the activation of IFN-beta promoter, thus protecting the virus against cell antiviral state. Blocks the type I interferon signaling pathway by interacting with host TYK2 and thereby inhibiting downstream STAT1 and STAT2 phosphorylation. Blocks the type I interferon signaling pathway by disrupting the RIG-I signaling pathway. Moderately affects the type II interferon signaling. Prevents PP1alpha/gamma-mediated dephosphorylation of host IFIH1/MDA5 and thus blocks its activation. The chain is Non-structural protein V (P/V) from Measles virus (strain Edmonston) (MeV).